Reading from the N-terminus, the 510-residue chain is MRAETQTIKMTEASSPTPVLEMRGISQIFPGVKALDGVDIALYPGKVTALIGENGAGKSTLVKILTGIYRPNEGEILLDGKAVHFHSAQDAIDAGVTAIHQETVLFDELSVGENIFLGHAPKGRFGLIDWKTINERARILLEQLESTIDPTIRLKDLSIAQRHLVAIARALSVEARIVIMDEPTAALSRKEIDDLFRIVENLKRQGKAILFISHKFDEVYEIAENYAVFRDGKMVGAGTLATTPQDEIVRLMVGRDVTNAFPKQAVTLGPTVLSVRDYSHQTEFRDISLDLRKGEILGLYGLIGAGRSELCQSLFGITRPASGEVTLDGQPLTIRSPEDAIRAGIVYVPEERGRHGLALDMPIYQNMSLPSLTRTSRKGFLTAANEFALARKYAARLDLRAAALSVPVGTLSGGNQQKVVIGKWLATKPKVIILDEPTKGIDIGSKAAVHGFISELAAEGLSIIMISSELPEILGMSDRAIVMREGLMAGQFERAEFSPEKLVRAATGNA.

2 consecutive ABC transporter domains span residues 20 to 256 (LEMR…VGRD) and 266 to 510 (VTLG…TGNA). 52 to 59 (GENGAGKS) lines the ATP pocket.

The protein belongs to the ABC transporter superfamily. Ribose importer (TC 3.A.1.2.1) family. In terms of assembly, the complex is composed of an ATP-binding protein (RbsA), two transmembrane proteins (RbsC) and a solute-binding protein (RbsB).

The protein resides in the cell inner membrane. The enzyme catalyses D-ribose(out) + ATP + H2O = D-ribose(in) + ADP + phosphate + H(+). Its function is as follows. Part of the ABC transporter complex RbsABC involved in ribose import. Responsible for energy coupling to the transport system. In Agrobacterium fabrum (strain C58 / ATCC 33970) (Agrobacterium tumefaciens (strain C58)), this protein is Ribose import ATP-binding protein RbsA 1.